We begin with the raw amino-acid sequence, 472 residues long: L-aspartate oxidase (472 aa).

Residues Ser7–Ala10, Ser36–Gly43, and Asp190 contribute to the FAD site. Arg256 acts as the Proton donor/acceptor in catalysis. FAD is bound by residues Glu332 and Ser348–Leu349.

This sequence belongs to the FAD-dependent oxidoreductase 2 family. NadB subfamily. It depends on FAD as a cofactor.

It localises to the cytoplasm. It catalyses the reaction L-aspartate + O2 = iminosuccinate + H2O2. The protein operates within cofactor biosynthesis; NAD(+) biosynthesis; iminoaspartate from L-aspartate (oxidase route): step 1/1. Functionally, catalyzes the oxidation of L-aspartate to iminoaspartate, the first step in the de novo biosynthesis of NAD(+). The protein is L-aspartate oxidase (nadB) of Saccharolobus solfataricus (strain ATCC 35092 / DSM 1617 / JCM 11322 / P2) (Sulfolobus solfataricus).